Reading from the N-terminus, the 471-residue chain is UDP-N-acetylmuramate--L-alanine ligase (471 aa).

114–120 (GTHGKTT) serves as a coordination point for ATP.

It belongs to the MurCDEF family.

The protein localises to the cytoplasm. It carries out the reaction UDP-N-acetyl-alpha-D-muramate + L-alanine + ATP = UDP-N-acetyl-alpha-D-muramoyl-L-alanine + ADP + phosphate + H(+). The protein operates within cell wall biogenesis; peptidoglycan biosynthesis. In terms of biological role, cell wall formation. This Brucella abortus (strain S19) protein is UDP-N-acetylmuramate--L-alanine ligase.